The following is a 437-amino-acid chain: Regulator of phospholipase D SRF1 (437 aa).

Residues 1–24 (MGDSNSSQEAYSDTTSTNASRIAD) form a disordered region. Over 1–267 (MGDSNSSQEA…LTSLLLDNQY (267 aa)) the chain is Cytoplasmic. Phosphoserine occurs at positions 45 and 167. Residues 268 to 288 (LILGLRIFTGILSCISLALAI) traverse the membrane as a helical segment. Residues 289 to 308 (KIFQNSRSNNTISESKIGQQ) lie on the Extracellular side of the membrane. A glycan (N-linked (GlcNAc...) asparagine) is linked at Asn-297. A helical transmembrane segment spans residues 309-329 (PSTIMAICVNAVAIAYIIYIA). Residues 330-348 (HDEFAGKPVGLRNPLSKLK) lie on the Cytoplasmic side of the membrane. Residues 349 to 369 (LILLDLLFIIFSSANLALAFN) form a helical membrane-spanning segment. Residues 370–403 (TRFDKEWVCTSIRRSNGSTYGYPKIPRICRKQEA) lie on the Extracellular side of the membrane. N-linked (GlcNAc...) asparagine glycosylation occurs at Asn-385. Residues 404-424 (LSAFLFVALFMWVITFSISIV) traverse the membrane as a helical segment. Over 425 to 437 (RVVEKVSSITNRN) the chain is Cytoplasmic.

Interacts with SPO14.

The protein localises to the membrane. Regulator of phospholipase D (SPO14) which is required for SPO14 catalytic activity in mitotic cells. Essential to buffer the toxic effects of C16:0 platelet activating factor. This chain is Regulator of phospholipase D SRF1 (SRF1), found in Saccharomyces cerevisiae (strain ATCC 204508 / S288c) (Baker's yeast).